The chain runs to 391 residues: S-adenosylmethionine synthase (391 aa).

Positions 1–20 are disordered; that stretch reads MPRSDYLFTSESVSEGHPDK. His17 provides a ligand contact to ATP. Residue Asp19 coordinates Mg(2+). Glu45 contacts K(+). The L-methionine site is built by Glu58 and Gln102. Residues 102–112 are flexible loop; it reads QSADIAQGVDA. Residues 169-171, 235-236, Asp244, 250-251, Ala267, and Lys271 each bind ATP; these read DAK, KF, and RK. Asp244 lines the L-methionine pocket. Lys275 contacts L-methionine.

Belongs to the AdoMet synthase family. As to quaternary structure, homotetramer; dimer of dimers. Mg(2+) serves as cofactor. K(+) is required as a cofactor.

Its subcellular location is the cytoplasm. It catalyses the reaction L-methionine + ATP + H2O = S-adenosyl-L-methionine + phosphate + diphosphate. The protein operates within amino-acid biosynthesis; S-adenosyl-L-methionine biosynthesis; S-adenosyl-L-methionine from L-methionine: step 1/1. Functionally, catalyzes the formation of S-adenosylmethionine (AdoMet) from methionine and ATP. The overall synthetic reaction is composed of two sequential steps, AdoMet formation and the subsequent tripolyphosphate hydrolysis which occurs prior to release of AdoMet from the enzyme. The sequence is that of S-adenosylmethionine synthase from Methylorubrum extorquens (strain CM4 / NCIMB 13688) (Methylobacterium extorquens).